The primary structure comprises 289 residues: Lipoyl synthase 1 (289 aa).

Residues C33, C38, C44, C59, C63, C66, and S274 each contribute to the [4Fe-4S] cluster site. Positions 45 to 263 (FAGGTATFLI…RIGEEELGFL (219 aa)) constitute a Radical SAM core domain.

Belongs to the radical SAM superfamily. Lipoyl synthase family. The cofactor is [4Fe-4S] cluster.

It is found in the cytoplasm. It catalyses the reaction [[Fe-S] cluster scaffold protein carrying a second [4Fe-4S](2+) cluster] + N(6)-octanoyl-L-lysyl-[protein] + 2 oxidized [2Fe-2S]-[ferredoxin] + 2 S-adenosyl-L-methionine + 4 H(+) = [[Fe-S] cluster scaffold protein] + N(6)-[(R)-dihydrolipoyl]-L-lysyl-[protein] + 4 Fe(3+) + 2 hydrogen sulfide + 2 5'-deoxyadenosine + 2 L-methionine + 2 reduced [2Fe-2S]-[ferredoxin]. It functions in the pathway protein modification; protein lipoylation via endogenous pathway; protein N(6)-(lipoyl)lysine from octanoyl-[acyl-carrier-protein]: step 2/2. Its function is as follows. Catalyzes the radical-mediated insertion of two sulfur atoms into the C-6 and C-8 positions of the octanoyl moiety bound to the lipoyl domains of lipoate-dependent enzymes, thereby converting the octanoylated domains into lipoylated derivatives. This Parasynechococcus marenigrum (strain WH8102) protein is Lipoyl synthase 1.